The primary structure comprises 347 residues: Large ribosomal subunit protein uL3 (347 aa).

It belongs to the universal ribosomal protein uL3 family. As to quaternary structure, part of the 50S ribosomal subunit. Forms a cluster with proteins L14 and L24e.

Its function is as follows. One of the primary rRNA binding proteins, it binds directly near the 3'-end of the 23S rRNA, where it nucleates assembly of the 50S subunit. This is Large ribosomal subunit protein uL3 from Caldivirga maquilingensis (strain ATCC 700844 / DSM 13496 / JCM 10307 / IC-167).